Here is a 496-residue protein sequence, read N- to C-terminus: Glycerol kinase (496 aa).

Position 12 (T12) interacts with ADP. Residues T12, T13, and S14 each coordinate ATP. Residue T12 participates in sn-glycerol 3-phosphate binding. An ADP-binding site is contributed by R16. Residues R82, E83, and Y134 each contribute to the sn-glycerol 3-phosphate site. R82, E83, and Y134 together coordinate glycerol. At H230 the chain carries Phosphohistidine; by HPr. D244 provides a ligand contact to sn-glycerol 3-phosphate. 2 residues coordinate glycerol: D244 and Q245. Residues T266 and G309 each coordinate ADP. ATP is bound by residues T266, G309, Q313, and G410. The ADP site is built by G410 and N414.

This sequence belongs to the FGGY kinase family. In terms of assembly, homotetramer and homodimer (in equilibrium). The phosphoenolpyruvate-dependent sugar phosphotransferase system (PTS), including enzyme I, and histidine-containing protein (HPr) are required for the phosphorylation, which leads to the activation of the enzyme.

It carries out the reaction glycerol + ATP = sn-glycerol 3-phosphate + ADP + H(+). It functions in the pathway polyol metabolism; glycerol degradation via glycerol kinase pathway; sn-glycerol 3-phosphate from glycerol: step 1/1. Its activity is regulated as follows. Activated by phosphorylation and inhibited by fructose 1,6-bisphosphate (FBP). Functionally, key enzyme in the regulation of glycerol uptake and metabolism. Catalyzes the phosphorylation of glycerol to yield sn-glycerol 3-phosphate. This Bacillus velezensis (strain DSM 23117 / BGSC 10A6 / LMG 26770 / FZB42) (Bacillus amyloliquefaciens subsp. plantarum) protein is Glycerol kinase.